A 57-amino-acid chain; its full sequence is Large ribosomal subunit protein bL32 (57 aa).

Residues M1 to Q19 are compositionally biased toward basic residues. The disordered stretch occupies residues M1–W20.

This sequence belongs to the bacterial ribosomal protein bL32 family.

The protein is Large ribosomal subunit protein bL32 of Mycolicibacterium smegmatis (strain ATCC 700084 / mc(2)155) (Mycobacterium smegmatis).